A 210-amino-acid chain; its full sequence is Uracil phosphoribosyltransferase (210 aa).

5-phospho-alpha-D-ribose 1-diphosphate-binding positions include Arg80, Arg105, and 132–140 (DPMLATGGS). Residues Ile195 and 200 to 202 (GDA) contribute to the uracil site. Asp201 contacts 5-phospho-alpha-D-ribose 1-diphosphate.

It belongs to the UPRTase family. Mg(2+) serves as cofactor.

It catalyses the reaction UMP + diphosphate = 5-phospho-alpha-D-ribose 1-diphosphate + uracil. The protein operates within pyrimidine metabolism; UMP biosynthesis via salvage pathway; UMP from uracil: step 1/1. Its activity is regulated as follows. Allosterically activated by GTP. Catalyzes the conversion of uracil and 5-phospho-alpha-D-ribose 1-diphosphate (PRPP) to UMP and diphosphate. The sequence is that of Uracil phosphoribosyltransferase from Deinococcus radiodurans (strain ATCC 13939 / DSM 20539 / JCM 16871 / CCUG 27074 / LMG 4051 / NBRC 15346 / NCIMB 9279 / VKM B-1422 / R1).